The chain runs to 59 residues: Venom protein 37.1 (59 aa).

Residues 1–18 form the signal peptide; sequence MVSTLMIASVKLRLYCTA.

It belongs to the non-disulfide-bridged peptide (NDBP) superfamily. Long chain multifunctional peptide (group 2) family. Expressed by the venom gland.

It is found in the secreted. In Lychas mucronatus (Chinese swimming scorpion), this protein is Venom protein 37.1.